Here is a 389-residue protein sequence, read N- to C-terminus: Type 2 DNA topoisomerase 6 subunit A (389 aa).

A Topo IIA-type catalytic domain is found at 13–161 (KARLRAAEVM…MLILSKEKGK (149 aa)). Catalysis depends on Y107, which acts as the O-(5'-phospho-DNA)-tyrosine intermediate. Residues E208 and D260 each contribute to the Mg(2+) site.

The protein belongs to the TOP6A family. Homodimer. Heterotetramer of two Top6A and two Top6B chains. Requires Mg(2+) as cofactor.

It carries out the reaction ATP-dependent breakage, passage and rejoining of double-stranded DNA.. Functionally, relaxes both positive and negative superturns and exhibits a strong decatenase activity. The sequence is that of Type 2 DNA topoisomerase 6 subunit A from Aeropyrum pernix (strain ATCC 700893 / DSM 11879 / JCM 9820 / NBRC 100138 / K1).